A 379-amino-acid chain; its full sequence is Citrate utilization protein B (379 aa).

8 residues coordinate [4Fe-4S] cluster: Cys28, Cys31, Cys34, Cys38, Cys62, Cys65, Cys68, and Cys72.

This chain is Citrate utilization protein B (citB), found in Escherichia coli.